The primary structure comprises 818 residues: BDNF/NT-3 growth factors receptor (818 aa).

A signal peptide spans 1–31 (MVSWRRRPGPGLARLWGLCCLVLGCWRGALG). 2 cysteine pairs are disulfide-bonded: Cys32-Cys38 and Cys36-Cys45. The Extracellular portion of the chain corresponds to 32–426 (CPASCRCSSW…DVSNKENEDS (395 aa)). Asn66 carries N-linked (GlcNAc...) asparagine glycosylation. An LRR 1 repeat occupies 71-92 (YIANQRKLESINDNEVGFYVGL). A glycan (N-linked (GlcNAc...) asparagine) is linked at Asn94. Residues 95–116 (LTVVDSGLRFVSRQAFVKNINL) form an LRR 2 repeat. Asn120 carries N-linked (GlcNAc...) asparagine glycosylation. 2 disulfide bridges follow: Cys151-Cys175 and Cys153-Cys193. Residues 196 to 281 (PSANLSNYNI…GEVQTSAELT (86 aa)) enclose the Ig-like C2-type 1 domain. Asn199, Asn204, Asn226, Asn253, Asn287, Asn324, and Asn337 each carry an N-linked (GlcNAc...) asparagine glycan. A disulfide bridge connects residues Cys217 and Cys265. The Ig-like C2-type 2 domain maps to 295 to 364 (TPDHHWCIPF…NGAYTLLAKN (70 aa)). An intrachain disulfide couples Cys301 to Cys344. Residues 384–394 (GSGPIVDPDVY) are provides specificity for BDNF as ligand versus NTF3 and NTF4. Over residues 400–418 (PNDLGDTTNNSNQITSPDV) the composition is skewed to polar residues. The interval 400–420 (PNDLGDTTNNSNQITSPDVSN) is disordered. Residue Asn408 is glycosylated (N-linked (GlcNAc...) asparagine). Residues 427 to 450 (ITVYVVVGIAALVCTGLVIMLIIL) form a helical membrane-spanning segment. At 451–818 (KFGRHSKFGM…ASPVYLDILG (368 aa)) the chain is on the cytoplasmic side. Residues 469 to 494 (NDDDSASPLHHISNGSNTPSSSEGGP) form a disordered region. The span at 481 to 491 (SNGSNTPSSSE) shows a compositional bias: polar residues. Tyr512 carries the post-translational modification Phosphotyrosine; by autocatalysis. Positions 534–803 (IVLKRELGEG…LNIKEIHSLL (270 aa)) constitute a Protein kinase domain. ATP contacts are provided by residues 540-548 (LGEGAFGKV) and Lys568. Asp672 serves as the catalytic Proton acceptor. Residues Tyr698, Tyr702, Tyr703, and Tyr813 each carry the phosphotyrosine; by autocatalysis modification.

The protein belongs to the protein kinase superfamily. Tyr protein kinase family. Insulin receptor subfamily. As to quaternary structure, exists in a dynamic equilibrium between monomeric (low affinity) and dimeric (high affinity) structures. Interacts (phosphorylated upon activation by BDNF) with SHC1; mediates SHC1 phosphorylation and activation. Interacts (phosphorylated upon activation by BDNF) with PLCG1 and/or PLCG2; mediates PLCG1 phosphorylation and activation. Interacts with SH2B1 and SH2B2. Interacts with NGFR; may regulate the ligand specificity of the receptor. Interacts with SORCS2; this interaction is important for normal targeting to post-synaptic densities in response to high-frequency stimulation. Interacts (phosphorylated upon ligand-binding) with SH2D1A; regulates NTRK2. Interacts with SQSTM1 and KIDINS220. Interacts (phosphorylated upon ligand-binding) with FRS2; activates the MAPK signaling pathway. Interacts with APPL1. Interacts with MAPK8IP3/JIP3 and KLC1; interaction with KLC1 is mediated by MAPK8IP3/JIP3. Ligand-mediated auto-phosphorylation. As to expression, detected in embryonic brain and orsal root ganglia.

It localises to the cell membrane. The protein resides in the endosome membrane. The protein localises to the cell projection. It is found in the axon. Its subcellular location is the dendrite. It localises to the cytoplasm. The protein resides in the perinuclear region. The protein localises to the postsynaptic density. The catalysed reaction is L-tyrosyl-[protein] + ATP = O-phospho-L-tyrosyl-[protein] + ADP + H(+). Its activity is regulated as follows. The neuronal activity and the influx of calcium positively regulate the kinase activity and the internalization of the receptor which are both important for active signaling. Regulated by NGFR that may control the internalization of the receptor. NGFR may also stimulate the activation by BDNF compared to NTF3 and NTF4. The formation of active receptors dimers able to fully transduce the ligand-mediated signal, may be negatively regulated by the formation of inactive heterodimers with the non-catalytic isoforms. In terms of biological role, receptor tyrosine kinase involved in the development and the maturation of the central and the peripheral nervous systems through regulation of neuron survival, proliferation, migration, differentiation, and synapse formation and plasticity. Receptor for BDNF/brain-derived neurotrophic factor and NTF4/neurotrophin-4. Alternatively can also bind NTF3/neurotrophin-3 which is less efficient in activating the receptor but regulates neuron survival through NTRK2. Upon ligand-binding, undergoes homodimerization, autophosphorylation and activation. Recruits, phosphorylates and/or activates several downstream effectors including SHC1, FRS2, SH2B1, SH2B2 and PLCG1 that regulate distinct overlapping signaling cascades. Through SHC1, FRS2, SH2B1, SH2B2 activates the GRB2-Ras-MAPK cascade that regulates for instance neuronal differentiation including neurite outgrowth. Through the same effectors controls the Ras-PI3 kinase-AKT1 signaling cascade that mainly regulates growth and survival. Through PLCG1 and the downstream protein kinase C-regulated pathways controls synaptic plasticity. Thereby, plays a role in learning and memory by regulating both short term synaptic function and long-term potentiation. PLCG1 also leads to NF-Kappa-B activation and the transcription of genes involved in cell survival. Hence, it is able to suppress anoikis, the apoptosis resulting from loss of cell-matrix interactions. May also play a role in neutrophin-dependent calcium signaling in glial cells and mediate communication between neurons and glia. The sequence is that of BDNF/NT-3 growth factors receptor (NTRK2) from Gallus gallus (Chicken).